The chain runs to 1129 residues: Large proline-rich protein bag6 (1129 aa).

Residues 1 to 76 enclose the Ubiquitin-like domain; the sequence is MEVTVKTLDS…HLVERAPPQT (76 aa). 8 disordered regions span residues 69–108, 187–235, 347–402, 490–518, 550–606, 654–692, 942–967, and 987–1009; these read VERAPPQTQPSTGGPSTSSSTSPSSSNAANVPGAGAPERN, QPVN…SPSE, TGNG…HPHP, PAAPSFPPQPGVATTPPGPGGATTAVPGA, GSNT…QHLS, VPVSTSPPQSASQAPPPSSPSPPPAHSSPPPAAAPESLP, VPQAPEASSQDQPMETTPVDCQNGAA, and VPTICTDSEHPTQEDTGSEQWAA. Positions 73 to 105 are enriched in low complexity; it reads PPQTQPSTGGPSTSSSTSPSSSNAANVPGAGAP. 2 stretches are compositionally biased toward polar residues: residues 209-232 and 364-383; these read RETLPQTTQNTDGQSNTAPTSHPS and HTPTNTSEPQRSNSDNQPPS. 2 stretches are compositionally biased toward low complexity: residues 553 to 593 and 655 to 666; these read TPSS…SSGP and PVSTSPPQSASQ. Residues 667–686 are compositionally biased toward pro residues; it reads APPPSSPSPPPAHSSPPPAA. Over residues 947–956 the composition is skewed to polar residues; that stretch reads EASSQDQPME.

As to quaternary structure, component of the bag6/bat3 complex.

The protein localises to the cytoplasm. It localises to the cytosol. The protein resides in the nucleus. It is found in the secreted. Its subcellular location is the extracellular exosome. Its function is as follows. ATP-independent molecular chaperone preventing the aggregation of misfolded and hydrophobic patches-containing proteins. Functions as part of a cytosolic protein quality control complex, the bag6/bat3 complex, which maintains these client proteins in a soluble state and participates in their proper delivery to the endoplasmic reticulum or alternatively can promote their sorting to the proteasome where they undergo degradation. The bag6/bat3 complex is involved in the post-translational delivery of tail-anchored/type II transmembrane proteins to the endoplasmic reticulum membrane. Similarly, the bag6/bat3 complex also functions as a sorting platform for proteins of the secretory pathway that are mislocalized to the cytosol either delivering them to the proteasome for degradation or to the endoplasmic reticulum. The bag6/bat3 complex also plays a role in the endoplasmic reticulum-associated degradation (ERAD), a quality control mechanism that eliminates unwanted proteins of the endoplasmic reticulum through their retrotranslocation to the cytosol and their targeting to the proteasome. It maintains these retrotranslocated proteins in an unfolded yet soluble state condition in the cytosol to ensure their proper delivery to the proteasome. Also required for selective ubiquitin-mediated degradation of defective nascent chain polypeptides by the proteasome. Also involved in endoplasmic reticulum stress-induced pre-emptive quality control, a mechanism that selectively attenuates the translocation of newly synthesized proteins into the endoplasmic reticulum and reroutes them to the cytosol for proteasomal degradation. May ensure the proper degradation of these proteins and thereby protects the endoplasmic reticulum from protein overload upon stress. By stabilizing a large spectrum of proteins, may indirectly affect different biological processes including apoptosis. By controlling the steady-state expression of the IGF1R receptor, indirectly regulates the insulin-like growth factor receptor signaling pathway. In terms of biological role, when nuclear, may also act as a component of some chromatin regulator complex. This is Large proline-rich protein bag6 from Xenopus tropicalis (Western clawed frog).